We begin with the raw amino-acid sequence, 412 residues long: MGFITKAIPIVLAALSTVNGARILEAGPHAETIPNKYIVVMKKDVSEESFSAHTTWLSQTLNSRLMRRAGSSKPMAGMQNKYSLGGIFRAYSGEFDDAMIKDISSHDDVDFIEPDFVVRATTNGTNLTHQDNVPSWGLARVSTRKPGGTTYYYDPSAGKGVTAYVIDTGIDTKHEDFGGRAKWGKNLVDQMDEDCNGHGTHVAGTVGGTKYGLAKGVSLVAVKVLDCEGSGSNSGVIKGMEWAMMDASGGGNGTAKAAGKAVMNMSLGGPRSEATNQAAKAISDAGIFLAVAAGNENMDAQHSSPASEPSVCTVAASTKDDGKANFSNFGSVVDVYAPGKDIVSLKPGGGTDTLSGTSMASPHVCGLGAYLIGLGKQGGPGLCDTIKEMANDAIQSPGEDTTSKLIYNGSGK.

Residues M1–G20 form the signal peptide. Residues A21–L127 constitute a propeptide that is removed on maturation. The region spanning K36–A120 is the Inhibitor I9 domain. N-linked (GlcNAc...) asparagine glycans are attached at residues N123 and N126. In terms of domain architecture, Peptidase S8 spans S135–K412. Catalysis depends on charge relay system residues D167 and H198. N-linked (GlcNAc...) asparagine glycans are attached at residues N252, N264, and N325. The active-site Charge relay system is S358. An N-linked (GlcNAc...) asparagine glycan is attached at N408.

The protein belongs to the peptidase S8 family.

It is found in the secreted. Its function is as follows. Secreted subtilisin-like serine protease with keratinolytic activity that contributes to pathogenicity. The polypeptide is Subtilisin-like protease 6 (SUB6) (Trichophyton verrucosum (Cattle ringworm fungus)).